Reading from the N-terminus, the 200-residue chain is Recombination protein RecR (200 aa).

The C4-type zinc-finger motif lies at 58-73; the sequence is CSICGNITEDDPCPIC. The region spanning 81–177 is the Toprim domain; sequence SQILVVEQSQ…KVTRLAHGLS (97 aa).

Belongs to the RecR family.

In terms of biological role, may play a role in DNA repair. It seems to be involved in an RecBC-independent recombinational process of DNA repair. It may act with RecF and RecO. This chain is Recombination protein RecR, found in Limosilactobacillus reuteri (strain DSM 20016) (Lactobacillus reuteri).